A 498-amino-acid chain; its full sequence is ATP synthase subunit beta, chloroplastic (498 aa).

Residue 172–179 coordinates ATP; the sequence is GGAGVGKT.

Belongs to the ATPase alpha/beta chains family. F-type ATPases have 2 components, CF(1) - the catalytic core - and CF(0) - the membrane proton channel. CF(1) has five subunits: alpha(3), beta(3), gamma(1), delta(1), epsilon(1). CF(0) has four main subunits: a(1), b(1), b'(1) and c(9-12).

The protein resides in the plastid. The protein localises to the chloroplast thylakoid membrane. The enzyme catalyses ATP + H2O + 4 H(+)(in) = ADP + phosphate + 5 H(+)(out). Produces ATP from ADP in the presence of a proton gradient across the membrane. The catalytic sites are hosted primarily by the beta subunits. The chain is ATP synthase subunit beta, chloroplastic from Nicotiana sp. (Tobacco).